The sequence spans 128 residues: Organic solute transporter subunit beta (128 aa).

Residues 1–30 (MDHSAEKAAANAEVPQELLEEMLWYFRAED) are Extracellular-facing. The helical transmembrane segment at 31–53 (AAPWNYSILVLAVLVVMTSMFLL) threads the bilayer. Over 54-128 (RRSILANRNR…FLPDPQETES (75 aa)) the chain is Cytoplasmic. 2 disordered regions span residues 61–80 (RNRK…HLDD) and 101–128 (PDLA…ETES). Basic and acidic residues-rich tracts occupy residues 66 to 80 (QPQD…HLDD) and 101 to 115 (PDLA…EKDS). The residue at position 116 (S116) is a Phosphoserine.

This sequence belongs to the OST-beta family. As to quaternary structure, interacts with SLC51A. The Ost-alpha/Ost-beta complex is a heterodimer composed of alpha (SLC51A) and beta (SLC51B) subunit; induces the transport of SLC51A from the endoplasmic reticulum to the plasma membrane. Present at high level in ileum. In ileum, it is restricted to the apical domain on the mature villus enterocytes with little detectable expression in the goblet cells or crypt enterocytes (at protein level). Expressed in kidney but not in heart, brain, liver, spleen, embryo, lung, thymus, ovary nor testis.

It is found in the cell membrane. It carries out the reaction taurocholate(out) = taurocholate(in). The catalysed reaction is tauroursodeoxycholate(out) = tauroursodeoxycholate(in). It catalyses the reaction glycoursodeoxycholate(out) = glycoursodeoxycholate(in). The enzyme catalyses glycocholate(out) = glycocholate(in). It carries out the reaction taurochenodeoxycholate(out) = taurochenodeoxycholate(in). The catalysed reaction is glycochenodeoxycholate(out) = glycochenodeoxycholate(in). It catalyses the reaction taurodeoxycholate(out) = taurodeoxycholate(in). The enzyme catalyses glycodeoxycholate(out) = glycodeoxycholate(in). It carries out the reaction prostaglandin E2(out) = prostaglandin E2(in). The catalysed reaction is estrone 3-sulfate(out) = estrone 3-sulfate(in). It catalyses the reaction dehydroepiandrosterone 3-sulfate(out) = dehydroepiandrosterone 3-sulfate(in). Essential component of the Ost-alpha/Ost-beta complex, a heterodimer that acts as the intestinal basolateral transporter responsible for bile acid export from enterocytes into portal blood. The Ost-alpha/Ost-beta complex efficiently transports the major species of bile acids (taurocholate). Taurine conjugates are transported more efficiently across the basolateral membrane than glycine-conjugated bile acids. Can also transport steroids such as estrone 3-sulfate and dehydroepiandrosterone 3-sulfate, therefore playing a role in the enterohepatic circulation of sterols. Able to transport eicosanoids such as prostaglandin E2. Modulates SLC51A glycosylation, membrane trafficking and stability activities. The sequence is that of Organic solute transporter subunit beta (Slc51b) from Mus musculus (Mouse).